A 414-amino-acid polypeptide reads, in one-letter code: Bystin (414 aa).

Residues 1–11 are compositionally biased toward basic residues; it reads MSAKRNTKLRH. Positions 1–91 are disordered; it reads MSAKRNTKLR…PSDDEGQADD (91 aa). A compositionally biased stretch (basic and acidic residues) spans 12–24; that stretch reads APLEHAYVDDKSV. The span at 25–34 shows a compositional bias: basic residues; that stretch reads RRNKRSKQRG.

It belongs to the bystin family.

It is found in the nucleus. It localises to the nucleolus. Required for processing of 20S pre-rRNA precursor and biogenesis of 40S ribosomal subunits. This is Bystin (bysl) from Monosiga brevicollis (Choanoflagellate).